Consider the following 33-residue polypeptide: Photosystem II reaction center protein Psb30 (33 aa).

A helical membrane pass occupies residues 5–25 (VIAQLTVLTLMVVSGPLVIVL).

It belongs to the Psb30/Ycf12 family. As to quaternary structure, PSII is composed of 1 copy each of membrane proteins PsbA, PsbB, PsbC, PsbD, PsbE, PsbF, PsbH, PsbI, PsbJ, PsbK, PsbL, PsbM, PsbT, PsbX, PsbY, PsbZ, Psb30/Ycf12, peripheral proteins of the oxygen-evolving complex and a large number of cofactors. It forms dimeric complexes.

The protein resides in the plastid. Its subcellular location is the chloroplast thylakoid membrane. Its function is as follows. A core subunit of photosystem II (PSII), probably helps stabilize the reaction center. In Pinus koraiensis (Korean pine), this protein is Photosystem II reaction center protein Psb30.